Consider the following 657-residue polypeptide: Threonine--tRNA ligase (657 aa).

The 64-residue stretch at 7–70 folds into the TGS domain; it reads ILAVIALTLP…TADAAIEIIT (64 aa). The interval 253 to 555 is catalytic; it reads DHRKLGAELE…LIEHTAGNFP (303 aa). Zn(2+)-binding residues include cysteine 351, histidine 402, and histidine 532.

It belongs to the class-II aminoacyl-tRNA synthetase family. As to quaternary structure, homodimer. The cofactor is Zn(2+).

It is found in the cytoplasm. It catalyses the reaction tRNA(Thr) + L-threonine + ATP = L-threonyl-tRNA(Thr) + AMP + diphosphate + H(+). Functionally, catalyzes the attachment of threonine to tRNA(Thr) in a two-step reaction: L-threonine is first activated by ATP to form Thr-AMP and then transferred to the acceptor end of tRNA(Thr). Also edits incorrectly charged L-seryl-tRNA(Thr). In Pelodictyon phaeoclathratiforme (strain DSM 5477 / BU-1), this protein is Threonine--tRNA ligase.